The chain runs to 478 residues: D(1B) dopamine receptor (478 aa).

Residues 1–38 (MLPPGRNGTAHRARLGLQRQLAQVDAPGGSAAPLGPAQ) are Extracellular-facing. Residue asparagine 7 is glycosylated (N-linked (GlcNAc...) asparagine). A helical transmembrane segment spans residues 39 to 64 (VVTAGLLTLLIVWTLLGNVLVCAAIV). The Cytoplasmic portion of the chain corresponds to 65 to 75 (RSRHLRAKMTN). Residues 76-102 (IFIVSLAVSDLFVALLVMPWKAVAEVA) traverse the membrane as a helical segment. The Extracellular portion of the chain corresponds to 103–111 (GYWPFGAFC). A disulfide bridge connects residues cysteine 111 and cysteine 211. Residues 112–134 (DIWVAFDIMCSTASILNLCIISV) form a helical membrane-spanning segment. Residues 135-153 (DRYWAISRPFRYERKMTQR) lie on the Cytoplasmic side of the membrane. Residues 154–179 (VALVMVALAWTLSILISFIPVQLNWH) form a helical membrane-spanning segment. At 180–215 (RDKAGSQGREGLLSNETPWEEGWELDGRTENCDSSL) the chain is on the extracellular side. Residues 216 to 240 (NRTYAISSSLISFYIPVAIMIVTYT) traverse the membrane as a helical segment. The Cytoplasmic portion of the chain corresponds to 241-289 (RIYRIAQVQIRRISSLERAAEHAQSCRSRGACEPDPSLRASIKKETKVF). Residues 290–317 (KTLSVIMGVFVCCWLPFFILNCMVPFCS) form a helical membrane-spanning segment. Residues 318-335 (SGDAQGPRTGFPCVSETT) lie on the Extracellular side of the membrane. A helical membrane pass occupies residues 336–357 (FDIFVWFGWANSSLNPIIYAFN). Residues 358–478 (ADFRKVFAQL…LTPNCFHKTA (121 aa)) are Cytoplasmic-facing. A lipid anchor (S-palmitoyl cysteine) is attached at cysteine 370. The disordered stretch occupies residues 416–446 (GDREVGEEEEAEEEGPFDHMSQISPTTPDGD). The span at 420-430 (VGEEEEAEEEG) shows a compositional bias: acidic residues.

This sequence belongs to the G-protein coupled receptor 1 family.

It localises to the cell membrane. In terms of biological role, dopamine receptor whose activity is mediated by G proteins which activate adenylyl cyclase. The protein is D(1B) dopamine receptor (Drd5) of Mus musculus (Mouse).